The primary structure comprises 164 residues: Deoxyuridine 5'-triphosphate nucleotidohydrolase (164 aa).

Substrate-binding positions include 66–68, Asn-79, 83–85, and Lys-93; these read RSG and TVD.

It belongs to the dUTPase family. It depends on Mg(2+) as a cofactor.

It carries out the reaction dUTP + H2O = dUMP + diphosphate + H(+). It functions in the pathway pyrimidine metabolism; dUMP biosynthesis; dUMP from dCTP (dUTP route): step 2/2. This enzyme is involved in nucleotide metabolism: it produces dUMP, the immediate precursor of thymidine nucleotides and it decreases the intracellular concentration of dUTP so that uracil cannot be incorporated into DNA. The polypeptide is Deoxyuridine 5'-triphosphate nucleotidohydrolase (Rhodococcus erythropolis (strain PR4 / NBRC 100887)).